The chain runs to 411 residues: Putative BMP-2-inducible kinase-like protein (411 aa).

3 disordered regions span residues 1-87 (MIAP…TQDI), 215-280 (SQQQ…RVSQ), and 392-411 (QQSQ…PSKQ). Composition is skewed to basic and acidic residues over residues 8-18 (SSEEEGQKDEE) and 53-68 (EKRS…KAKY). Positions 47–71 (EDEEEEEKRSSDSDYEQAKAKYSDM) form a coiled coil. Composition is skewed to basic residues over residues 220 to 234 (VKQR…RQRR) and 243 to 258 (NGKR…KKTL).

The chain is Putative BMP-2-inducible kinase-like protein (BMP2KL) from Homo sapiens (Human).